A 480-amino-acid chain; its full sequence is RAC-alpha serine/threonine-protein kinase (480 aa).

The PH domain occupies 5–108; the sequence is AIVKEGWLHK…WATAIQTVAD (104 aa). N6-acetyllysine occurs at positions 14 and 20. 14–19 is a 1D-myo-inositol 1,3,4,5-tetrakisphosphate binding site; the sequence is KRGEYI. Residues 23-25 and N53 contribute to the 1D-myo-inositol 1,3,4,5-tetrakisphosphate site; that span reads RPR. Residues C60 and C77 are joined by a disulfide bond. R86 is a 1D-myo-inositol 1,3,4,5-tetrakisphosphate binding site. Positions 114 to 137 are disordered; that stretch reads EEETMDFRSGSPSDNSGAEEMEVS. The residue at position 124 (S124) is a Phosphoserine. S126 and S129 each carry phosphoserine; alternate. 2 O-linked (GlcNAc) serine; alternate glycosylation sites follow: S126 and S129. The Protein kinase domain occupies 150 to 408; the sequence is FEYLKLLGKG…AKEIMQHRFF (259 aa). 156 to 164 provides a ligand contact to ATP; that stretch reads LGKGTFGKV. A Phosphotyrosine; by TNK2 modification is found at Y176. Position 179 (K179) interacts with ATP. D274 serves as the catalytic Proton acceptor. K284 is covalently cross-linked (Glycyl lysine isopeptide (Lys-Gly) (interchain with G-Cter in ubiquitin)). C296 and C310 are joined by a disulfide. O-linked (GlcNAc) threonine glycosylation is present at T305. At T308 the chain carries Phosphothreonine; by IKKE, PDPK1 and TBK1. O-linked (GlcNAc) threonine glycosylation is present at T312. Residues 409–480 enclose the AGC-kinase C-terminal domain; the sequence is ANIVWQDVYE…QFSYSASGTA (72 aa). A Phosphothreonine modification is found at T448. T450 bears the Phosphothreonine; by MTOR mark. The segment at 450–480 is disordered; that stretch reads TPPDQDDSMECVDSERRPHFPQFSYSASGTA. A glycan (O-linked (GlcNAc) serine; alternate) is linked at S473. S473 carries the post-translational modification Phosphoserine; by IKKE, MTOR, PRKDC and TBK1; alternate. Phosphotyrosine is present on Y474. S477 is subject to Phosphoserine; by CDK2 and MTOR. T479 is modified (phosphothreonine; by CDK2 and MTOR).

The protein belongs to the protein kinase superfamily. AGC Ser/Thr protein kinase family. RAC subfamily. As to quaternary structure, interacts with and phosphorylated by PDPK1. Interacts with AGAP2 (isoform 2/PIKE-A); the interaction occurs in the presence of guanine nucleotides. Interacts with AKTIP. Interacts (via PH domain) with MTCP1, TCL1A and TCL1B. Interacts with CDKN1B; the interaction phosphorylates CDKN1B promoting 14-3-3 binding and cell-cycle progression. Interacts with MAP3K5 and TRAF6. Interacts with BAD, PPP2R5B, STK3 and STK4. Interacts (via PH domain) with SIRT1. Interacts with SRPK2 in a phosphorylation-dependent manner. Interacts with TRIM13; the interaction ubiquitinates AKT1 leading to its proteasomal degradation. Interacts with RAF1. Interacts (via the C-terminus) with CCDC88A (via its C-terminus) and THEM4 (via its C-terminus). Interacts with GRB10; the interaction leads to GRB10 phosphorylation thus promoting YWHAE-binding. Interacts with KCTD20. Interacts with BTBD10. Interacts with PA2G4. Interacts with KIF14; the interaction is detected in the plasma membrane upon INS stimulation and promotes AKT1 phosphorylation. Interacts with FAM83B; activates the PI3K/AKT signaling cascade. Interacts with WDFY2 (via WD repeats 1-3). Forms a complex with WDFY2 and FOXO1. Interacts with FAM168A. Interacts with SYAP1 (via phosphorylated form and BSD domain); this interaction is enhanced in a mTORC2-mediated manner in response to epidermal growth factor (EGF) stimulation and activates AKT1. Interacts with PKHM3. Interacts with FKBP5/FKBP51; promoting interaction between Akt/AKT1 and PHLPP1, thereby enhancing dephosphorylation and subsequent activation of Akt/AKT1. Interacts with TMEM175; leading to formation of the lysoK(GF) complex. O-GlcNAcylation at Thr-305 and Thr-312 inhibits activating phosphorylation at Thr-308 via disrupting the interaction between AKT1 and PDPK1. O-GlcNAcylation at Ser-473 also probably interferes with phosphorylation at this site. Post-translationally, phosphorylation on Thr-308, Ser-473 and Tyr-474 is required for full activity. Phosphorylation of the activation loop at Thr-308 by PDPK1/PDK1 is a prerequisite for full activation. Phosphorylation by mTORC2 in response to growth factors plays a key role in AKT1 activation: mTORC2 phosphorylates different sites depending on the context, such as Thr-450, Ser-473, Ser-477 or Thr-479, thereby facilitating subsequent phosphorylation of the activation loop by PDPK1/PDK1. Phosphorylation at Ser-473 by mTORC2 promotes ubiquitination and degradation by the proteasome. Also phosphorylated at Ser-477 and Thr-479 by CDK2, facilitating subsequent phosphorylation of the activation loop by PDPK1/PDK1. Activated TNK2 phosphorylates it on Tyr-176 resulting in its binding to the anionic plasma membrane phospholipid PA. This phosphorylated form localizes to the cell membrane, where it is targeted by PDPK1 and PDPK2 for further phosphorylations on Thr-308 and Ser-473 leading to its activation. Phosphorylated at Thr-308 and Ser-473 by IKBKE and TBK1. Ser-473 phosphorylation is enhanced by interaction with AGAP2 isoform 2 (PIKE-A). Ser-473 phosphorylation is enhanced by signaling through activated FLT3. Ser-473 is dephosphorylated by PHLPP. Dephosphorylated at Thr-308 and Ser-473 by PP2A phosphatase. The phosphorylated form of PPP2R5B is required for bridging AKT1 with PP2A phosphatase. Ser-473 is dephosphorylated by CPPED1, leading to termination of signaling. AIM2 acts as an inhibitor of AKT1 by inhibiting phosphorylation Ser-473: AIM2 acts both by inhibiting the activity of PRKDC/DNA-PK kinase and promoting dephosphorylation by PP2A phosphatase. In terms of processing, ubiquitinated; undergoes both 'Lys-48'- and 'Lys-63'-linked polyubiquitination. TRAF6-induced 'Lys-63'-linked AKT1 ubiquitination is critical for phosphorylation and activation. When ubiquitinated, it translocates to the plasma membrane, where it becomes phosphorylated. When fully phosphorylated and translocated into the nucleus, undergoes 'Lys-48'-polyubiquitination catalyzed by TTC3, leading to its degradation by the proteasome. Also ubiquitinated by TRIM13 leading to its proteasomal degradation. Ubiquitinated via 'Lys-48'-linked polyubiquitination by ZNRF1, leading to its degradation by the proteasome. Phosphorylated, undergoes 'Lys-48'-linked polyubiquitination preferentially at Lys-284 catalyzed by MUL1, leading to its proteasomal degradation. Acetylated on Lys-14 and Lys-20 by the histone acetyltransferases EP300 and KAT2B. Acetylation results in reduced phosphorylation and inhibition of activity. Deacetylated at Lys-14 and Lys-20 by SIRT1. SIRT1-mediated deacetylation relieves the inhibition. Post-translationally, cleavage by caspase-3/CASP3. Cleaved at the caspase-3 consensus site Asp-462 during apoptosis, resulting in down-regulation of the AKT signaling pathway and decreased cell survival. As to expression, widely expressed. Low levels found in liver with slightly higher levels present in thymus and testis.

Its subcellular location is the cytoplasm. It is found in the nucleus. The protein resides in the cell membrane. The protein localises to the mitochondrion intermembrane space. The enzyme catalyses L-seryl-[protein] + ATP = O-phospho-L-seryl-[protein] + ADP + H(+). The catalysed reaction is L-threonyl-[protein] + ATP = O-phospho-L-threonyl-[protein] + ADP + H(+). With respect to regulation, three specific sites, one in the kinase domain (Thr-308) and the two other ones in the C-terminal regulatory region (Ser-473 and Tyr-474), need to be phosphorylated for its full activation. AKT1 is one of 3 closely related serine/threonine-protein kinases (AKT1, AKT2 and AKT3) called the AKT kinase, and which regulate many processes including metabolism, proliferation, cell survival, growth and angiogenesis. This is mediated through serine and/or threonine phosphorylation of a range of downstream substrates. Over 100 substrate candidates have been reported so far, but for most of them, no isoform specificity has been reported. AKT is responsible of the regulation of glucose uptake by mediating insulin-induced translocation of the SLC2A4/GLUT4 glucose transporter to the cell surface. Phosphorylation of PTPN1 at 'Ser-50' negatively modulates its phosphatase activity preventing dephosphorylation of the insulin receptor and the attenuation of insulin signaling. Phosphorylation of TBC1D4 triggers the binding of this effector to inhibitory 14-3-3 proteins, which is required for insulin-stimulated glucose transport. AKT also regulates the storage of glucose in the form of glycogen by phosphorylating GSK3A at 'Ser-21' and GSK3B at 'Ser-9', resulting in inhibition of its kinase activity. Phosphorylation of GSK3 isoforms by AKT is also thought to be one mechanism by which cell proliferation is driven. AKT also regulates cell survival via the phosphorylation of MAP3K5 (apoptosis signal-related kinase). Phosphorylation of 'Ser-83' decreases MAP3K5 kinase activity stimulated by oxidative stress and thereby prevents apoptosis. AKT mediates insulin-stimulated protein synthesis by phosphorylating TSC2 at 'Ser-939' and 'Thr-1462', thereby activating the mTORC1 signaling pathway, and leading to both phosphorylation of 4E-BP1 and in activation of RPS6KB1. Also regulates the mTORC1 signaling pathway by catalyzing phosphorylation of CASTOR1 and DEPDC5. AKT plays a role as key modulator of the AKT-mTOR signaling pathway controlling the tempo of the process of newborn neurons integration during adult neurogenesis, including correct neuron positioning, dendritic development and synapse formation. Part of a positive feedback loop of mTORC2 signaling by mediating phosphorylation of MAPKAP1/SIN1, promoting mTORC2 activation. AKT is involved in the phosphorylation of members of the FOXO factors (Forkhead family of transcription factors), leading to binding of 14-3-3 proteins and cytoplasmic localization. In particular, FOXO1 is phosphorylated at 'Thr-24', 'Ser-256' and 'Ser-319'. FOXO3 and FOXO4 are phosphorylated on equivalent sites. AKT has an important role in the regulation of NF-kappa-B-dependent gene transcription and positively regulates the activity of CREB1 (cyclic AMP (cAMP)-response element binding protein). The phosphorylation of CREB1 induces the binding of accessory proteins that are necessary for the transcription of pro-survival genes such as BCL2 and MCL1. AKT phosphorylates 'Ser-454' on ATP citrate lyase (ACLY), thereby potentially regulating ACLY activity and fatty acid synthesis. Activates the 3B isoform of cyclic nucleotide phosphodiesterase (PDE3B) via phosphorylation of 'Ser-273', resulting in reduced cyclic AMP levels and inhibition of lipolysis. Phosphorylates PIKFYVE on 'Ser-318', which results in increased PI(3)P-5 activity. The Rho GTPase-activating protein DLC1 is another substrate and its phosphorylation is implicated in the regulation cell proliferation and cell growth. Signals downstream of phosphatidylinositol 3-kinase (PI(3)K) to mediate the effects of various growth factors such as platelet-derived growth factor (PDGF), epidermal growth factor (EGF), insulin and insulin-like growth factor 1 (IGF1). AKT mediates the antiapoptotic effects of IGF1. Essential for the SPATA13-mediated regulation of cell migration and adhesion assembly and disassembly. May be involved in the regulation of the placental development. Phosphorylates STK4/MST1 at 'Thr-120' and 'Thr-387' leading to inhibition of its: kinase activity, nuclear translocation, autophosphorylation and ability to phosphorylate FOXO3. Phosphorylates STK3/MST2 at 'Thr-117' and 'Thr-384' leading to inhibition of its: cleavage, kinase activity, autophosphorylation at Thr-180, binding to RASSF1 and nuclear translocation. Phosphorylates SRPK2 and enhances its kinase activity towards SRSF2 and ACIN1 and promotes its nuclear translocation. Phosphorylates RAF1 at 'Ser-259' and negatively regulates its activity. Phosphorylation of BAD stimulates its pro-apoptotic activity. Phosphorylates KAT6A at 'Thr-369' and this phosphorylation inhibits the interaction of KAT6A with PML and negatively regulates its acetylation activity towards p53/TP53. Phosphorylates palladin (PALLD), modulating cytoskeletal organization and cell motility. Phosphorylates prohibitin (PHB), playing an important role in cell metabolism and proliferation. Phosphorylates CDKN1A, for which phosphorylation at 'Thr-145' induces its release from CDK2 and cytoplasmic relocalization. These recent findings indicate that the AKT1 isoform has a more specific role in cell motility and proliferation. Phosphorylates CLK2 thereby controlling cell survival to ionizing radiation. Phosphorylates PCK1 at 'Ser-90', reducing the binding affinity of PCK1 to oxaloacetate and changing PCK1 into an atypical protein kinase activity using GTP as donor. Also acts as an activator of TMEM175 potassium channel activity in response to growth factors: forms the lysoK(GF) complex together with TMEM175 and acts by promoting TMEM175 channel activation, independently of its protein kinase activity. Acts as a negative regulator of the cGAS-STING pathway by mediating phosphorylation of CGAS during mitosis, leading to its inhibition. Acts as a regulator of mitochondrial calcium uptake by mediating phosphorylation of MICU1 in the mitochondrial intermembrane space, impairing MICU1 maturation. Acts as an inhibitor of tRNA methylation by mediating phosphorylation of the N-terminus of METTL1, thereby inhibiting METTL1 methyltransferase activity. In response to LPAR1 receptor pathway activation, phosphorylates Rabin8/RAB3IP which alters its activity and phosphorylates WDR44 which induces WDR44 binding to Rab11, thereby switching Rab11 vesicular function from preciliary trafficking to endocytic recycling. This is RAC-alpha serine/threonine-protein kinase (Akt1) from Mus musculus (Mouse).